Reading from the N-terminus, the 382-residue chain is Mannitol-1-phosphate 5-dehydrogenase (382 aa).

3 to 14 (ALHFGAGNIGRG) is an NAD(+) binding site.

This sequence belongs to the mannitol dehydrogenase family.

The enzyme catalyses D-mannitol 1-phosphate + NAD(+) = beta-D-fructose 6-phosphate + NADH + H(+). This is Mannitol-1-phosphate 5-dehydrogenase from Erwinia tasmaniensis (strain DSM 17950 / CFBP 7177 / CIP 109463 / NCPPB 4357 / Et1/99).